The sequence spans 504 residues: MFS antiporter QDR2 (504 aa).

The span at 1–14 (MLSTTQSVTEPTEV) shows a compositional bias: polar residues. Residues 1–23 (MLSTTQSVTEPTEVTSKKVEDIE) form a disordered region. The Cytoplasmic segment spans residues 1–41 (MLSTTQSVTEPTEVTSKKVEDIEKENDEETPYSIFTSYDRL). The chain crosses the membrane as a helical span at residues 42-62 (VLIVILSLIGFWSTISSPIYF). Topologically, residues 63–75 (PALPTLTSYFHTS) are extracellular. A helical transmembrane segment spans residues 76–96 (SSIMNISVVAYLIFQGIAPTI). The Cytoplasmic segment spans residues 97 to 106 (SSNLADTFGR). Residues 107 to 129 (RPVILASIIVFCASCVAISQTNV) form a helical membrane-spanning segment. At 130–132 (YWL) the chain is on the extracellular side. Residues 133 to 155 (LAVLRCIQAAGIAAVISISSGVA) form a helical membrane-spanning segment. The Cytoplasmic portion of the chain corresponds to 156–169 (GDVCTRANRGSMVG). Residues 170 to 190 (AVAGLQLVGNGIGGLVGAALI) traverse the membrane as a helical segment. Residues 191–198 (SSFNSWRS) are Extracellular-facing. The chain crosses the membrane as a helical span at residues 199–219 (IFIFLTIGGGVTFILAIFILP). Over 220–278 (ETSRKLVGNGSVVPKNILNKSPYIYLPHFKKRMNNDITTIVPATRFDLLGPLKIFFQKN) the chain is Cytoplasmic. Residues 279–299 (VFCTLLPVGIHFAAWTMVLTS) traverse the membrane as a helical segment. At 300–311 (LSTELESRYHYS) the chain is on the extracellular side. Residues 312–332 (VMHVGLIYLPQGIACIAGSLV) traverse the membrane as a helical segment. At 333 to 370 (VGKSLDWYYRYRKTIYDQEVECLPLDERPQFNIVATRL) the chain is on the cytoplasmic side. The chain crosses the membrane as a helical span at residues 371-391 (TLSVVPALLMIIGLVIFGWCI). Topologically, residues 392–396 (QYKRH) are extracellular. Residues 397 to 417 (IISIIISTILVSFSASVFIAI) form a helical membrane-spanning segment. Topologically, residues 418 to 438 (CTTMLVDLYPNNGSGSTSCLN) are cytoplasmic. Residues 439–456 (LMRCWLAALGAGVLDSMI) traverse the membrane as a helical segment. Residues 457-460 (NAMN) lie on the Extracellular side of the membrane. The helical transmembrane segment at 461-483 (VGGTYTVVAGFCILFDLALIYVL) threads the bilayer. Residues 484 to 504 (HNAKKKFSNSGPTTTKSPPKQ) are Cytoplasmic-facing.

This sequence belongs to the major facilitator superfamily. CAR1 family.

It is found in the cell membrane. Functionally, MFS antiporter that does not display functional linkage as drug transporter and performs functions that significantly affect biofilm development and virulence. No substrate for transport has been identified yet, but plays an important role in the growth in the host. The polypeptide is MFS antiporter QDR2 (QDR2) (Candida albicans (strain SC5314 / ATCC MYA-2876) (Yeast)).